The chain runs to 1378 residues: Tonsoku-like protein (1378 aa).

TPR repeat units follow at residues 27 to 60 (AALCHQLGELLAGHGRYAEALEQHWQELQLRERA), 67 to 100 (AVAHRKIGERLAEMEDYPAALQHQHQYLELAHSL), 107 to 147 (QRAW…VDEE), 162 to 195 (TRLYLNLGLTFESLQQTALCNDYFRKSIFLAEQN), 202 to 235 (FRARYNLGTIHWRAGQHSQAMRCLEGARECAHTM), 242 to 275 (SECCVVIAQVLQDLGDFLAAKRALKKAYRLGSQK), 311 to 344 (MVICEQLGDLFSKAGDFPRAAEAYQKQLRFAELL), and 352 to 385 (AIIHVSLATTLGDMKDHHGAVRHYEEELRLRSGN). The interval 475-524 (AATAESEALEAGEVELSEGEDDTDGLTPQLEEDEELQGHLGRRKGSKWNR) is disordered. The segment covering 481-509 (EALEAGEVELSEGEDDTDGLTPQLEEDEE) has biased composition (acidic residues). Residues 514–523 (LGRRKGSKWN) show a composition bias toward basic residues. ANK repeat units follow at residues 528-557 (MGETLLHRACIEGQLRRVQDLVRQGHPLNP), 561-590 (CGWTPLHEACNYGHLEIVRFLLDHGAAVDD), and 597-626 (EGITPLHDALNCGHFEVAELLLERGASVTL). The tract at residues 667–789 (AASGQDPHSS…REAATASTSR (123 aa)) is disordered. The span at 672-684 (DPHSSQAFHTPSS) shows a compositional bias: polar residues. A compositionally biased stretch (pro residues) spans 691 to 702 (TSPPLSPCPEPP). Phosphoserine is present on S719. Low complexity-rich tracts occupy residues 736 to 753 (GPASSSSSSEGEDSAGPA) and 777 to 789 (ASNREAATASTSR). An Omega-N-methylarginine modification is found at R797. The tract at residues 842–933 (LTRSRRPRPR…PLGPAPPPPI (92 aa)) is disordered. Composition is skewed to polar residues over residues 883–899 (CMQSCSAPVNAGPSSLA) and 907–918 (STPRVSEPSGDS). LRR repeat units lie at residues 1069 to 1093 (HTALRELRLAGNRLGDKCVAELVAA), 1097 to 1122 (MPSLALLDLSSNHLGPEGLRQLAMGL), 1128 to 1151 (LQSLEELDLSMNPLGDGCGQSLAS), 1188 to 1212 (AEHLKTLSLSYNALGAPALARTLQS), 1247 to 1270 (GCALAHLTLSANHLGDKAVRDLCR), 1275 to 1300 (CPSLISLDLSANPEISCASLEELLST), and 1331 to 1354 (AAQLRELQLCSRRLCAEDRDALRQ).

It belongs to the Tonsoku family. In terms of assembly, component of the MMS22L-TONSL complex, a complex at least composed of MMS22L and TONSL/NFKBIL2. Interacts with the MCM complex, the FACT complex and the RPA complex. Interacts with MCM5; the interaction is direct. Binds histones, with a strong preference for histone H3.1 (histones H3.1 and H3-4/H3.1t). Interacts (via ANK repeats) with histone H4; specifically binds histone H4 lacking methylation at 'Lys-20' (H4K20me0). May interact with DNAJC9; the interaction seems to be histone-dependent. In terms of tissue distribution, expressed in heart, skeletal muscle and tracheal epithelial cells.

It localises to the nucleus. The protein localises to the chromosome. It is found in the cytoplasm. Its function is as follows. Component of the MMS22L-TONSL complex, a complex that promotes homologous recombination-mediated repair of double-strand breaks (DSBs) at stalled or collapsed replication forks. The MMS22L-TONSL complex is required to maintain genome integrity during DNA replication. It mediates the assembly of RAD51 filaments on single-stranded DNA (ssDNA): the MMS22L-TONSL complex is recruited to DSBs following histone replacement by histone chaperones and eviction of the replication protein A complex (RPA/RP-A) from DSBs. Following recruitment to DSBs, the TONSL-MMS22L complex promotes recruitment of RAD51 filaments and subsequent homologous recombination. Within the complex, TONSL acts as a histone reader, which recognizes and binds newly synthesized histones following their replacement by histone chaperones. Specifically binds histone H4 lacking methylation at 'Lys-20' (H4K20me0) and histone H3.1. This chain is Tonsoku-like protein, found in Homo sapiens (Human).